We begin with the raw amino-acid sequence, 278 residues long: Orotidine 5'-phosphate decarboxylase (278 aa).

The active-site Proton donor is the lysine 96.

It belongs to the OMP decarboxylase family. Type 2 subfamily.

It carries out the reaction orotidine 5'-phosphate + H(+) = UMP + CO2. Its pathway is pyrimidine metabolism; UMP biosynthesis via de novo pathway; UMP from orotate: step 2/2. This Salinispora tropica (strain ATCC BAA-916 / DSM 44818 / JCM 13857 / NBRC 105044 / CNB-440) protein is Orotidine 5'-phosphate decarboxylase.